Reading from the N-terminus, the 280-residue chain is Suppressor of disruption of TFIIS (280 aa).

The protein belongs to the SSM1 family.

Could be an enzyme that inactivates 6-azauracil by modifying it. This is Suppressor of disruption of TFIIS (SDT1) from Saccharomyces cerevisiae (strain ATCC 204508 / S288c) (Baker's yeast).